We begin with the raw amino-acid sequence, 332 residues long: CMRF35-like molecule 1 (332 aa).

Positions 1-18 (MHLSLLALFLFWISGCFT) are cleaved as a signal peptide. Topologically, residues 19 to 181 (AQDPVTGPEE…GDGNGFLDLS (163 aa)) are extracellular. The region spanning 22-125 (PVTGPEEVSG…YDHMFKVHVS (104 aa)) is the Ig-like V-type domain. 2 disulfides stabilise this stretch: Cys-41-Cys-109 and Cys-55-Cys-63. An N-linked (GlcNAc...) asparagine glycan is attached at Asn-89. A helical transmembrane segment spans residues 182-202 (VLLPVISAALLLLLLVVSLIA). The Cytoplasmic portion of the chain corresponds to 203–332 (WRMVRRQKKA…EYSSIRRPMP (130 aa)). Disordered regions lie at residues 251 to 270 (PRTSPLKKGSSMSSSGKDHQ) and 313 to 332 (PRTNLGEETTEYSSIRRPMP).

This sequence belongs to the CD300 family. In terms of assembly, interacts with PTPN6/SHP-1 in a tyrosine phosphorylation dependent manner. Interacts with IL4R. Post-translationally, phosphorylated on tyrosine.

Its subcellular location is the cell membrane. In terms of biological role, acts as an inhibitory receptor for myeloid cells and mast cells. Positively regulates the phagocytosis of apoptotic cells (efferocytosis) via phosphatidylserine (PS) recognition; recognizes and binds PS as a ligand which is expressed on the surface of apoptotic cells. Plays an important role in the maintenance of immune homeostasis, by promoting macrophage-mediated efferocytosis and by inhibiting dendritic cell-mediated efferocytosis. Negatively regulates Fc epsilon receptor-dependent mast cell activation and allergic responses via binding to ceramide and sphingomyelin which act as ligands. May act as a coreceptor for interleukin 4 (IL-4). Associates with and regulates IL-4 receptor alpha-mediated responses by augmenting IL-4- and IL-13-induced signaling. Negatively regulates the Toll-like receptor (TLR) signaling mediated by MYD88 and TRIF through activation of PTPN6/SHP-1 and PTPN11/SHP-2. Inhibits osteoclast formation. Induces macrophage cell death upon engagement. This is CMRF35-like molecule 1 (Cd300lf) from Rattus norvegicus (Rat).